Reading from the N-terminus, the 293-residue chain is Glutamyl-Q tRNA(Asp) synthetase (293 aa).

Residues 8 to 12 (RFAPT) and Glu44 each bind L-glutamate. Residues 11 to 21 (PTPSGYLHFGS) carry the 'HIGH' region motif. Zn(2+) is bound by residues Cys100, Cys102, Tyr114, and Cys118. L-glutamate-binding residues include Tyr171 and Arg189. The 'KMSKS' region motif lies at 227–231 (KLGKS). Residue Lys230 participates in ATP binding.

Belongs to the class-I aminoacyl-tRNA synthetase family. GluQ subfamily. Zn(2+) is required as a cofactor.

In terms of biological role, catalyzes the tRNA-independent activation of glutamate in presence of ATP and the subsequent transfer of glutamate onto a tRNA(Asp). Glutamate is transferred on the 2-amino-5-(4,5-dihydroxy-2-cyclopenten-1-yl) moiety of the queuosine in the wobble position of the QUC anticodon. In Pseudomonas aeruginosa (strain ATCC 15692 / DSM 22644 / CIP 104116 / JCM 14847 / LMG 12228 / 1C / PRS 101 / PAO1), this protein is Glutamyl-Q tRNA(Asp) synthetase.